A 291-amino-acid chain; its full sequence is Phosphate-binding protein PstS 2 (291 aa).

The first 21 residues, 1 to 21 (MKFKKMLTLAAIGLSGFGLVA), serve as a signal peptide directing secretion. C22 carries N-palmitoyl cysteine lipidation. Residue C22 is the site of S-diacylglycerol cysteine attachment.

This sequence belongs to the PstS family. As to quaternary structure, the complex is composed of two ATP-binding proteins (PstB), two transmembrane proteins (PstC and PstA) and a solute-binding protein (PstS).

It localises to the cell membrane. Part of the ABC transporter complex PstSACB involved in phosphate import. The polypeptide is Phosphate-binding protein PstS 2 (pstS2) (Streptococcus pneumoniae serotype 4 (strain ATCC BAA-334 / TIGR4)).